A 137-amino-acid chain; its full sequence is Nucleoside diphosphate kinase (137 aa).

The ATP site is built by Lys-10, Phe-58, Arg-86, Thr-92, Arg-103, and Asn-113. His-116 (pros-phosphohistidine intermediate) is an active-site residue.

Belongs to the NDK family. Homotetramer. It depends on Mg(2+) as a cofactor.

The protein localises to the cytoplasm. It carries out the reaction a 2'-deoxyribonucleoside 5'-diphosphate + ATP = a 2'-deoxyribonucleoside 5'-triphosphate + ADP. The enzyme catalyses a ribonucleoside 5'-diphosphate + ATP = a ribonucleoside 5'-triphosphate + ADP. In terms of biological role, major role in the synthesis of nucleoside triphosphates other than ATP. The ATP gamma phosphate is transferred to the NDP beta phosphate via a ping-pong mechanism, using a phosphorylated active-site intermediate. The protein is Nucleoside diphosphate kinase of Helicobacter pylori (strain P12).